The chain runs to 68 residues: Putative transcript Y 10 protein (68 aa).

This Homo sapiens (Human) protein is Putative transcript Y 10 protein (TTTY10).